Here is a 346-residue protein sequence, read N- to C-terminus: Mannonate dehydratase (346 aa).

It belongs to the mannonate dehydratase family. It depends on Fe(2+) as a cofactor. Mn(2+) serves as cofactor.

It catalyses the reaction D-mannonate = 2-dehydro-3-deoxy-D-gluconate + H2O. Its pathway is carbohydrate metabolism; pentose and glucuronate interconversion. In terms of biological role, catalyzes the dehydration of D-mannonate. The sequence is that of Mannonate dehydratase from Cupriavidus taiwanensis (strain DSM 17343 / BCRC 17206 / CCUG 44338 / CIP 107171 / LMG 19424 / R1) (Ralstonia taiwanensis (strain LMG 19424)).